The sequence spans 388 residues: Homoserine O-acetyltransferase (388 aa).

The AB hydrolase-1 domain occupies 55-354; the sequence is PIVLIEHALT…PTGHDGFLIE (300 aa). Ser-150 (nucleophile) is an active-site residue. Substrate is bound at residue Arg-220. Catalysis depends on residues Asp-318 and His-348. Asp-349 provides a ligand contact to substrate.

It belongs to the AB hydrolase superfamily. MetX family. In terms of assembly, homodimer.

It localises to the cytoplasm. The catalysed reaction is L-homoserine + acetyl-CoA = O-acetyl-L-homoserine + CoA. It functions in the pathway amino-acid biosynthesis; L-methionine biosynthesis via de novo pathway; O-acetyl-L-homoserine from L-homoserine: step 1/1. In terms of biological role, transfers an acetyl group from acetyl-CoA to L-homoserine, forming acetyl-L-homoserine. In Corynebacterium urealyticum (strain ATCC 43042 / DSM 7109), this protein is Homoserine O-acetyltransferase.